A 444-amino-acid polypeptide reads, in one-letter code: Transcriptional regulatory protein GlrR (444 aa).

Residues 7-121 (HLLLVDDDPG…ALYQAIDDAL (115 aa)) enclose the Response regulatory domain. Asp-56 carries the post-translational modification 4-aspartylphosphate. Residues 136–366 (IVTRSPLMLR…VNVIEQCVAL (231 aa)) form the Sigma-54 factor interaction domain. Residues 164–171 (GQSGTGKE) and 227–236 (AEGGTLFLDE) each bind ATP. Positions 414–433 (VTHAARMAGRNRTEFYKLLS) form a DNA-binding region, H-T-H motif.

Post-translationally, phosphorylated by GlrK.

Its subcellular location is the cytoplasm. Functionally, member of the two-component regulatory system GlrR/GlrK that up-regulates transcription of the glmY sRNA when cells enter the stationary growth phase. Regulates glmY transcription by binding to three conserved sites in the purL-glmY intergenic region. This Escherichia coli (strain K12) protein is Transcriptional regulatory protein GlrR (glrR).